A 33-amino-acid chain; its full sequence is Pardaxin P-3 (33 aa).

Belongs to the pardaxin family. In terms of assembly, in aqueous solution exists as a tetramer.

It localises to the secreted. The protein resides in the target cell membrane. In terms of biological role, exhibits unusual shark repellent and surfactant properties. Forms voltage-dependent, ion-permeable channels in membranes. At high concentration causes cell membrane lysis. The polypeptide is Pardaxin P-3 (Pardachirus pavoninus (Peacock sole)).